The sequence spans 458 residues: Elongation factor 1-alpha (458 aa).

Residue G2 is modified to N,N,N-trimethylglycine; by EFM7. K3 bears the N6,N6-dimethyllysine; by EFM7; alternate mark. N6-methyllysine; by EFM7; alternate is present on K3. Residues 5–240 form the tr-type G domain; it reads KSHINVVVIG…DAIEQPSRPT (236 aa). The tract at residues 14–21 is G1; it reads GHVDSGKS. Residue S18 is modified to Phosphoserine. GTP-binding residues include S21 and T22. N6-methyllysine; by EFM1 is present on K30. Residues 70–74 form a G2 region; that stretch reads GITID. T72 is modified (phosphothreonine). K79 is modified (N6,N6,N6-trimethyllysine; by EFM5). Residue T82 is modified to Phosphothreonine. The segment at 91 to 94 is G3; it reads DAPG. GTP is bound by residues N153, K154, and D156. Positions 153-156 are G4; that stretch reads NKMD. S163 carries the post-translational modification Phosphoserine. GTP is bound by residues S192, G193, and W194. Positions 192–194 are G5; the sequence is SGW. Glycyl lysine isopeptide (Lys-Gly) (interchain with G-Cter in ubiquitin) cross-links involve residues K224, K242, and K253. T259 is subject to Phosphothreonine. K271 participates in a covalent cross-link: Glycyl lysine isopeptide (Lys-Gly) (interchain with G-Cter in ubiquitin). At S289 the chain carries Phosphoserine. K316 bears the N6,N6-dimethyllysine; by EFM4; alternate mark. At K316 the chain carries N6-methyllysine; by EFM4; alternate. K390 bears the N6-methyllysine; by EFM6 mark. A Glycyl lysine isopeptide (Lys-Gly) (interchain with G-Cter in ubiquitin) cross-link involves residue K393. The residue at position 414 (S414) is a Phosphoserine. The residue at position 430 (T430) is a Phosphothreonine. Residue K437 forms a Glycyl lysine isopeptide (Lys-Gly) (interchain with G-Cter in ubiquitin) linkage. K458 carries the post-translational modification Lysine methyl ester.

The protein belongs to the TRAFAC class translation factor GTPase superfamily. Classic translation factor GTPase family. EF-Tu/EF-1A subfamily. The eukaryotic elongation factor 1 complex (eEF1) is probably a heterohexamer. Two trimeric complexes, each composed of eEF1A (TEF1 or TEF2), eEF1Balpha (EFB1) and eEF1Bgamma (CAM1 or TEF4), are probably dimerized via the eF1Bgamma subunits. Interacts with eEF1Balpha; the interaction is direct. Interacts with GCN2 (via C-terminus); this interaction is direct, occurs in amino acid-repleted cells, may be stabilized in a ribosome-dependent manner, reduces GCN2-mediated eIF-2-alpha phosphorylation and is lost in amino acid-starved cells and by uncharged tRNAs. Interacts with CEX1. Interacts with elongation factor 3 (YEF3 or HEF3). Interacts with NAP1. Interacts with SRV2. Interacts with chaperone ZPR1; the interaction is required for its proper folding. Binds to actin and forms a ternary complex with BNI1 and profilin. Interacts with the proteasome, probably via RPT1. Associates with ribosomes. Post-translationally, S-thiolated in response to oxidative stress, probably inhibiting the protein and causing a reduction in protein synthesis. Glutaminylated at Glu-45. An L-glutamine is linked to Glu-45 via the alpha amino group. This glutaminylation is yeast-specific and not essential for the normal functions of eEF1A. However, eEF1A glutaminylation slightly reduced growth under antibiotic-induced translational stress conditions.

The protein localises to the cytoplasm. It is found in the cytoskeleton. It functions in the pathway protein biosynthesis; polypeptide chain elongation. Inhibited by narciclasine. Its function is as follows. GTP-binding component of the eukaryotic elongation factor 1 complex (eEF1). In its active GTP-bound form, binds to and delivers aminoacyl-tRNA to the A-site of ribosomes during protein biosynthesis. In the presence of a correct codon-anticodon match between the aminoacyl-tRNA and the A-site codon of the ribosome-bound mRNA, the ribosome acts as a GTPase activator and the GTP is hydrolyzed. The inactive GDP-bound form leaves the ribosome and must be recycled by its guanine nucleotide exchange factor (GEF) (eEF1B subcomplex) before binding another molecule of aminoacyl-tRNA. Required for nuclear export of aminoacyl-tRNAs. May also be involved in translational quality control by targeting cotranslationally damaged proteins to the proteasome. Also exhibits actin filament-binding and -bundling activities and is involved in cytoskeleton organization. Plays a role as a negative regulator of GCN2 kinase activity by inhibiting GCN2-mediated eIF-2-alpha phosphorylation in amino acid-repleted cells. The protein is Elongation factor 1-alpha (TEF1) of Saccharomyces cerevisiae (strain ATCC 204508 / S288c) (Baker's yeast).